A 228-amino-acid chain; its full sequence is Glycerol-3-phosphate acyltransferase (228 aa).

6 consecutive transmembrane segments (helical) span residues 1–21, 56–76, 104–124, 136–156, 161–181, and 183–203; these read MINWLVLNAVILIVAYLLGAT, VPALVVLVIDIFKGALAIALV, MVIIAGLIAIVGHTKSIWIGF, ILLAISWVVGLGTLSVFIVVL, IVSLSSIIAAISVSGLMFFTG, and PLPYQIFAITGGIYVIWRHIS.

This sequence belongs to the PlsY family. Probably interacts with PlsX.

It is found in the cell inner membrane. The catalysed reaction is an acyl phosphate + sn-glycerol 3-phosphate = a 1-acyl-sn-glycero-3-phosphate + phosphate. It functions in the pathway lipid metabolism; phospholipid metabolism. Functionally, catalyzes the transfer of an acyl group from acyl-phosphate (acyl-PO(4)) to glycerol-3-phosphate (G3P) to form lysophosphatidic acid (LPA). This enzyme utilizes acyl-phosphate as fatty acyl donor, but not acyl-CoA or acyl-ACP. The chain is Glycerol-3-phosphate acyltransferase from Trichodesmium erythraeum (strain IMS101).